The sequence spans 599 residues: Elongation factor 4 (599 aa).

One can recognise a tr-type G domain in the interval 2 to 184; sequence KNIRNFSIIA…RLVRDIPPPQ (183 aa). Residues 14 to 19 and 131 to 134 contribute to the GTP site; these read DHGKST and NKID.

The protein belongs to the TRAFAC class translation factor GTPase superfamily. Classic translation factor GTPase family. LepA subfamily.

Its subcellular location is the cell inner membrane. The enzyme catalyses GTP + H2O = GDP + phosphate + H(+). Its function is as follows. Required for accurate and efficient protein synthesis under certain stress conditions. May act as a fidelity factor of the translation reaction, by catalyzing a one-codon backward translocation of tRNAs on improperly translocated ribosomes. Back-translocation proceeds from a post-translocation (POST) complex to a pre-translocation (PRE) complex, thus giving elongation factor G a second chance to translocate the tRNAs correctly. Binds to ribosomes in a GTP-dependent manner. This Salmonella gallinarum (strain 287/91 / NCTC 13346) protein is Elongation factor 4.